The primary structure comprises 180 residues: Large ribosomal subunit protein uL6 (180 aa).

The protein belongs to the universal ribosomal protein uL6 family. As to quaternary structure, part of the 50S ribosomal subunit.

In terms of biological role, this protein binds to the 23S rRNA, and is important in its secondary structure. It is located near the subunit interface in the base of the L7/L12 stalk, and near the tRNA binding site of the peptidyltransferase center. The protein is Large ribosomal subunit protein uL6 of Mycoplasma capricolum subsp. capricolum (strain California kid / ATCC 27343 / NCTC 10154).